The chain runs to 709 residues: Phosphoribosylformylglycinamidine synthase subunit PurL (709 aa).

His-36 is an active-site residue. 2 residues coordinate ATP: Tyr-39 and Lys-80. Glu-82 is a Mg(2+) binding site. Substrate-binding positions include 83–86 (SHNH) and Arg-105. The active-site Proton acceptor is His-84. Residue Asp-106 participates in Mg(2+) binding. Gln-226 contacts substrate. Position 252 (Asp-252) interacts with Mg(2+). 294–296 (ETQ) provides a ligand contact to substrate. 2 residues coordinate ATP: Asp-470 and Gly-507. Ser-510 serves as a coordination point for substrate.

The protein belongs to the FGAMS family. In terms of assembly, monomer. Part of the FGAM synthase complex composed of 1 PurL, 1 PurQ and 2 PurS subunits.

It localises to the cytoplasm. It carries out the reaction N(2)-formyl-N(1)-(5-phospho-beta-D-ribosyl)glycinamide + L-glutamine + ATP + H2O = 2-formamido-N(1)-(5-O-phospho-beta-D-ribosyl)acetamidine + L-glutamate + ADP + phosphate + H(+). Its pathway is purine metabolism; IMP biosynthesis via de novo pathway; 5-amino-1-(5-phospho-D-ribosyl)imidazole from N(2)-formyl-N(1)-(5-phospho-D-ribosyl)glycinamide: step 1/2. Its function is as follows. Part of the phosphoribosylformylglycinamidine synthase complex involved in the purines biosynthetic pathway. Catalyzes the ATP-dependent conversion of formylglycinamide ribonucleotide (FGAR) and glutamine to yield formylglycinamidine ribonucleotide (FGAM) and glutamate. The FGAM synthase complex is composed of three subunits. PurQ produces an ammonia molecule by converting glutamine to glutamate. PurL transfers the ammonia molecule to FGAR to form FGAM in an ATP-dependent manner. PurS interacts with PurQ and PurL and is thought to assist in the transfer of the ammonia molecule from PurQ to PurL. In Saccharolobus islandicus (strain Y.N.15.51 / Yellowstone #2) (Sulfolobus islandicus), this protein is Phosphoribosylformylglycinamidine synthase subunit PurL.